Here is a 302-residue protein sequence, read N- to C-terminus: uncharacterized protein (302 aa).

Functionally, may be a membrane-bound protein, possibly involved in IAA or IAA-Lysine transport. This is an uncharacterized protein from Pseudomonas savastanoi (Pseudomonas syringae pv. savastanoi).